The chain runs to 394 residues: Flap endonuclease 1 (394 aa).

The interval 1–103 is N-domain; it reads MGIKSLYQII…GELAKRTMRK (103 aa). A Mg(2+)-binding site is contributed by D34. R69 is a binding site for DNA. A Mg(2+)-binding site is contributed by D85. The disordered stretch occupies residues 102–123; it reads RKAEAQEAAEEAKETGTAEDVE. Residues 121–252 are I-domain; that stretch reads DVEKFSRRTV…NTALKMIRDH (132 aa). Mg(2+) contacts are provided by E157, E159, D178, and D180. E157 lines the DNA pocket. Residues G230 and D232 each coordinate DNA. Mg(2+) is bound at residue D232. The segment at 340–348 is interaction with PCNA; sequence QQSRLEGFF. The tract at residues 349–394 is disordered; it reads KPVAKTEQQKATAKRKAEEKAELAKKKKKEDAKAKRAMGAKPRGAR. The span at 363–382 shows a compositional bias: basic and acidic residues; sequence RKAEEKAELAKKKKKEDAKA. Residues 383–394 show a composition bias toward basic residues; the sequence is KRAMGAKPRGAR.

This sequence belongs to the XPG/RAD2 endonuclease family. FEN1 subfamily. As to quaternary structure, interacts with PCNA. Three molecules of FEN1 bind to one PCNA trimer with each molecule binding to one PCNA monomer. PCNA stimulates the nuclease activity without altering cleavage specificity. Requires Mg(2+) as cofactor. In terms of processing, phosphorylated. Phosphorylation upon DNA damage induces relocalization to the nuclear plasma.

Its subcellular location is the nucleus. It localises to the nucleolus. The protein localises to the nucleoplasm. The protein resides in the mitochondrion. Its function is as follows. Structure-specific nuclease with 5'-flap endonuclease and 5'-3' exonuclease activities involved in DNA replication and repair. During DNA replication, cleaves the 5'-overhanging flap structure that is generated by displacement synthesis when DNA polymerase encounters the 5'-end of a downstream Okazaki fragment. It enters the flap from the 5'-end and then tracks to cleave the flap base, leaving a nick for ligation. Also involved in the long patch base excision repair (LP-BER) pathway, by cleaving within the apurinic/apyrimidinic (AP) site-terminated flap. Acts as a genome stabilization factor that prevents flaps from equilibrating into structures that lead to duplications and deletions. Also possesses 5'-3' exonuclease activity on nicked or gapped double-stranded DNA, and exhibits RNase H activity. Also involved in replication and repair of rDNA and in repairing mitochondrial DNA. In Arthroderma otae (strain ATCC MYA-4605 / CBS 113480) (Microsporum canis), this protein is Flap endonuclease 1.